The primary structure comprises 404 residues: Argininosuccinate synthase (404 aa).

ATP-binding positions include 9-17 (AYSGGLDTS) and alanine 36. Tyrosine 87 lines the L-citrulline pocket. Glycine 117 is an ATP binding site. L-aspartate-binding residues include threonine 119, asparagine 123, and aspartate 124. Residue asparagine 123 participates in L-citrulline binding. Residues arginine 127, serine 176, and glutamate 261 each contribute to the L-citrulline site.

The protein belongs to the argininosuccinate synthase family. Type 1 subfamily. In terms of assembly, homotetramer.

The protein resides in the cytoplasm. It catalyses the reaction L-citrulline + L-aspartate + ATP = 2-(N(omega)-L-arginino)succinate + AMP + diphosphate + H(+). It participates in amino-acid biosynthesis; L-arginine biosynthesis; L-arginine from L-ornithine and carbamoyl phosphate: step 2/3. The sequence is that of Argininosuccinate synthase from Burkholderia pseudomallei (strain K96243).